The chain runs to 252 residues: Triosephosphate isomerase (252 aa).

Substrate is bound at residue 10 to 12; the sequence is NWK. Residue His-96 is the Electrophile of the active site. Glu-168 (proton acceptor) is an active-site residue. Residues Gly-174, Ser-214, and 235 to 236 each bind substrate; that span reads GG.

It belongs to the triosephosphate isomerase family. Homodimer.

It localises to the cytoplasm. The catalysed reaction is D-glyceraldehyde 3-phosphate = dihydroxyacetone phosphate. Its pathway is carbohydrate biosynthesis; gluconeogenesis. The protein operates within carbohydrate degradation; glycolysis; D-glyceraldehyde 3-phosphate from glycerone phosphate: step 1/1. Functionally, involved in the gluconeogenesis. Catalyzes stereospecifically the conversion of dihydroxyacetone phosphate (DHAP) to D-glyceraldehyde-3-phosphate (G3P). The chain is Triosephosphate isomerase from Streptococcus pyogenes serotype M18 (strain MGAS8232).